Reading from the N-terminus, the 101-residue chain is Small ribosomal subunit protein uS14 (101 aa).

It belongs to the universal ribosomal protein uS14 family. Part of the 30S ribosomal subunit. Contacts proteins S3 and S10.

Its function is as follows. Binds 16S rRNA, required for the assembly of 30S particles and may also be responsible for determining the conformation of the 16S rRNA at the A site. In Actinobacillus pleuropneumoniae serotype 5b (strain L20), this protein is Small ribosomal subunit protein uS14.